The chain runs to 246 residues: Nodulin-25 (246 aa).

The first 24 residues, 1–24, serve as a signal peptide directing secretion; that stretch reads MVYSNTYMLLGLGVFVLLSSHVLA.

It is found in the symbiosome. It localises to the peribacteroid space. Its function is as follows. Involved in the development and function of nodules. It might participate in the biological process of symbiotic nitrogen fixation. This Medicago sativa (Alfalfa) protein is Nodulin-25 (NMS-25).